Consider the following 272-residue polypeptide: uncharacterized protein (272 aa).

Composition is skewed to basic and acidic residues over residues 136 to 156 (VRRE…HIDI) and 231 to 240 (GCKESRRNEP). 2 disordered regions span residues 136-157 (VRRE…IDIH) and 174-272 (VKPK…WAAF). Residues 243–252 (DLSQLKKNLP) are compositionally biased toward polar residues. The span at 253–272 (STAGSGSSKSTGAASGWAAF) shows a compositional bias: low complexity.

This is an uncharacterized protein from Arabidopsis thaliana (Mouse-ear cress).